Here is a 345-residue protein sequence, read N- to C-terminus: Biotin synthase (345 aa).

Residues 59-286 (NEVQLSTLLS…TTMVRLSAGR (228 aa)) enclose the Radical SAM core domain. [4Fe-4S] cluster is bound by residues C74, C78, and C81. Positions 118, 149, 209, and 281 each coordinate [2Fe-2S] cluster.

The protein belongs to the radical SAM superfamily. Biotin synthase family. As to quaternary structure, homodimer. [4Fe-4S] cluster is required as a cofactor. Requires [2Fe-2S] cluster as cofactor.

The catalysed reaction is (4R,5S)-dethiobiotin + (sulfur carrier)-SH + 2 reduced [2Fe-2S]-[ferredoxin] + 2 S-adenosyl-L-methionine = (sulfur carrier)-H + biotin + 2 5'-deoxyadenosine + 2 L-methionine + 2 oxidized [2Fe-2S]-[ferredoxin]. Its pathway is cofactor biosynthesis; biotin biosynthesis; biotin from 7,8-diaminononanoate: step 2/2. In terms of biological role, catalyzes the conversion of dethiobiotin (DTB) to biotin by the insertion of a sulfur atom into dethiobiotin via a radical-based mechanism. In Leptothrix cholodnii (strain ATCC 51168 / LMG 8142 / SP-6) (Leptothrix discophora (strain SP-6)), this protein is Biotin synthase.